Here is a 1374-residue protein sequence, read N- to C-terminus: Protein Dicer (1374 aa).

Residues 19-206 enclose the Helicase ATP-binding domain; sequence VYNIASKQNT…YHRLYQWEQL (188 aa). 32-39 lines the ATP pocket; the sequence is MRTGAGKT. The DECH box motif lies at 145-148; it reads DECH. Residues 340-517 form the Helicase C-terminal domain; the sequence is DVTDKVFKLL…SLVCEERERV (178 aa). The region spanning 537 to 628 is the Dicer dsRNA-binding fold domain; that stretch reads AVSLLYNFCN…KPLDFRRKIA (92 aa). 2 RNase III domains span residues 916–1038 and 1083–1233; these read QALT…LDSG and SSYI…LDSG. Residues Glu-1123, Asp-1219, and Glu-1222 each coordinate Mg(2+). The segment at 1263 to 1355 is C-terminal dsRNA-binding fold; that stretch reads EHKVYQLLKD…LLYSCNCKFS (93 aa). 4 residues coordinate Zn(2+): Cys-1275, His-1312, Cys-1350, and Cys-1352.

This sequence belongs to the helicase family. Dicer subfamily. Requires Mg(2+) as cofactor. Mn(2+) serves as cofactor.

The protein localises to the cytoplasm. The protein resides in the nucleus. Its function is as follows. Required for G1 arrest and mating in response to nitrogen starvation. Ago1 regulation of cytokinesis and cell cycle checkpoints occurs downstream of dcr1. Required, indirectly, for regulated hyperphosphorylation of cdc2. Functionally, has a role in the RNA interference (RNAi) pathway which is important for heterochromatin formation, accurate chromosome segregation, centromere cohesion and telomere function during mitosis and meiosis. Digests double-stranded RNA (dsRNA) producing 21 to 23 bp dsRNAs, so-called interfering RNAs (siRNA). Required for both post-transcriptional and transcriptional gene silencing. Required for silencing at the centromeres and for initiation of transcriptionally silent heterochromatin at the mating type locus. Promotes histone H3 'Lys-10' methylation necessary for centromere function. Required for recruitment of swi6 and cohesin to an ectopic dg repeat. This Schizosaccharomyces pombe (strain 972 / ATCC 24843) (Fission yeast) protein is Protein Dicer (dcr1).